A 272-amino-acid polypeptide reads, in one-letter code: Shikimate dehydrogenase (NADP(+)) (272 aa).

Shikimate-binding positions include 14–16 (SLS) and Thr-61. Catalysis depends on Lys-65, which acts as the Proton acceptor. Asp-102 contacts shikimate. NADP(+) is bound by residues 127–131 (GAGGA), 151–156 (NRTPSK), and Leu-215. Tyr-217 provides a ligand contact to shikimate. Gly-239 is an NADP(+) binding site.

Belongs to the shikimate dehydrogenase family. Homodimer.

It carries out the reaction shikimate + NADP(+) = 3-dehydroshikimate + NADPH + H(+). It participates in metabolic intermediate biosynthesis; chorismate biosynthesis; chorismate from D-erythrose 4-phosphate and phosphoenolpyruvate: step 4/7. In terms of biological role, involved in the biosynthesis of the chorismate, which leads to the biosynthesis of aromatic amino acids. Catalyzes the reversible NADPH linked reduction of 3-dehydroshikimate (DHSA) to yield shikimate (SA). In Coxiella burnetii (strain CbuG_Q212) (Coxiella burnetii (strain Q212)), this protein is Shikimate dehydrogenase (NADP(+)).